Reading from the N-terminus, the 369-residue chain is Anhydro-N-acetylmuramic acid kinase (369 aa).

12–19 (GTSMDGVD) contacts ATP.

The protein belongs to the anhydro-N-acetylmuramic acid kinase family.

The catalysed reaction is 1,6-anhydro-N-acetyl-beta-muramate + ATP + H2O = N-acetyl-D-muramate 6-phosphate + ADP + H(+). It functions in the pathway amino-sugar metabolism; 1,6-anhydro-N-acetylmuramate degradation. It participates in cell wall biogenesis; peptidoglycan recycling. Catalyzes the specific phosphorylation of 1,6-anhydro-N-acetylmuramic acid (anhMurNAc) with the simultaneous cleavage of the 1,6-anhydro ring, generating MurNAc-6-P. Is required for the utilization of anhMurNAc either imported from the medium or derived from its own cell wall murein, and thus plays a role in cell wall recycling. The protein is Anhydro-N-acetylmuramic acid kinase of Shewanella loihica (strain ATCC BAA-1088 / PV-4).